The primary structure comprises 268 residues: Orotidine 5'-phosphate decarboxylase (268 aa).

Residues Asp-37, 59–61 (KTH), 91–100 (DRKFADIGNT), Tyr-217, and Arg-235 each bind substrate. The Proton donor role is filled by Lys-93.

The protein belongs to the OMP decarboxylase family.

The enzyme catalyses orotidine 5'-phosphate + H(+) = UMP + CO2. It participates in pyrimidine metabolism; UMP biosynthesis via de novo pathway; UMP from orotate: step 2/2. In Maudiozyma exigua (Yeast), this protein is Orotidine 5'-phosphate decarboxylase (URA4).